The chain runs to 88 residues: MVKLRLKRCGRKQRAVYRIVAIDVRSRREGRDLRKVGFYDPIKNQTYLNVPAILYFLEKGAQPTGTVQDILKKAEVFKELCPNQTKFN.

It belongs to the bacterial ribosomal protein bS16 family.

Its subcellular location is the plastid. It is found in the chloroplast. This is Small ribosomal subunit protein bS16c from Lactuca sativa (Garden lettuce).